The primary structure comprises 322 residues: Tetraacyldisaccharide 4'-kinase (322 aa).

54–61 (SVGGTGKT) is an ATP binding site.

Belongs to the LpxK family.

The catalysed reaction is a lipid A disaccharide + ATP = a lipid IVA + ADP + H(+). Its pathway is glycolipid biosynthesis; lipid IV(A) biosynthesis; lipid IV(A) from (3R)-3-hydroxytetradecanoyl-[acyl-carrier-protein] and UDP-N-acetyl-alpha-D-glucosamine: step 6/6. Its function is as follows. Transfers the gamma-phosphate of ATP to the 4'-position of a tetraacyldisaccharide 1-phosphate intermediate (termed DS-1-P) to form tetraacyldisaccharide 1,4'-bis-phosphate (lipid IVA). This is Tetraacyldisaccharide 4'-kinase from Francisella philomiragia subsp. philomiragia (strain ATCC 25017 / CCUG 19701 / FSC 153 / O#319-036).